The primary structure comprises 188 residues: dCTP deaminase (188 aa).

DCTP contacts are provided by residues 111–116 (KSTYAR), 135–137 (TLE), glutamine 156, tyrosine 170, lysine 179, and glutamine 180. The Proton donor/acceptor role is filled by glutamate 137.

This sequence belongs to the dCTP deaminase family. As to quaternary structure, homotrimer.

The enzyme catalyses dCTP + H2O + H(+) = dUTP + NH4(+). It functions in the pathway pyrimidine metabolism; dUMP biosynthesis; dUMP from dCTP (dUTP route): step 1/2. Functionally, catalyzes the deamination of dCTP to dUTP. In Rickettsia akari (strain Hartford), this protein is dCTP deaminase.